Reading from the N-terminus, the 375-residue chain is Putative F-box protein At1g12190 (375 aa).

The F-box domain occupies 1 to 46; that stretch reads MACVKFPWELMEEILYRVPSLSLSRFKTVSKEWNTLLNDKTFIKKH.

The sequence is that of Putative F-box protein At1g12190 from Arabidopsis thaliana (Mouse-ear cress).